The sequence spans 232 residues: Sensory rhodopsin III (232 aa).

7 helical membrane-spanning segments follow: residues 5–25 (IVWY…FVWF), 39–59 (LPPI…LIAG), 73–93 (FADW…LAGV), 100–120 (LAVA…SMSG), 125–145 (IAFA…IKTF), 168–188 (VVTW…TGII), and 194–214 (NFLV…ILLV). Lys205 carries the N6-(retinylidene)lysine modification.

The protein belongs to the archaeal/bacterial/fungal opsin family. As to quaternary structure, interacts with HtrM. Post-translationally, the covalent binding of retinal to the apoprotein, bacterioopsin, generates bacteriorhodopsin.

The protein resides in the membrane. Sensory rhodopsin. Associates with an unusual transducer lacking a methyl-accepting transducer domain found in all other photosensory transducers. The chromophore is all-trans-retinal in the dark. The chain is Sensory rhodopsin III (xop2) from Haloarcula marismortui (strain ATCC 43049 / DSM 3752 / JCM 8966 / VKM B-1809) (Halobacterium marismortui).